The chain runs to 216 residues: Large ribosomal subunit protein uL3 (216 aa).

Residue Q153 is modified to N5-methylglutamine.

This sequence belongs to the universal ribosomal protein uL3 family. As to quaternary structure, part of the 50S ribosomal subunit. Forms a cluster with proteins L14 and L19. Post-translationally, methylated by PrmB.

Its function is as follows. One of the primary rRNA binding proteins, it binds directly near the 3'-end of the 23S rRNA, where it nucleates assembly of the 50S subunit. This Burkholderia ambifaria (strain MC40-6) protein is Large ribosomal subunit protein uL3.